A 303-amino-acid polypeptide reads, in one-letter code: Probable 5-dehydro-4-deoxyglucarate dehydratase (303 aa).

The protein belongs to the DapA family.

The catalysed reaction is 5-dehydro-4-deoxy-D-glucarate + H(+) = 2,5-dioxopentanoate + CO2 + H2O. It participates in carbohydrate acid metabolism; D-glucarate degradation; 2,5-dioxopentanoate from D-glucarate: step 2/2. The polypeptide is Probable 5-dehydro-4-deoxyglucarate dehydratase (Acinetobacter baumannii (strain AB307-0294)).